A 620-amino-acid polypeptide reads, in one-letter code: Transcription factor kayak (620 aa).

Disordered stretches follow at residues 1–36 (MKVK…SNGV) and 184–288 (SDTD…EKRR). Residues 184–194 (SDTDDSNASWN) are compositionally biased toward polar residues. Composition is skewed to low complexity over residues 201–233 (GDTT…GANN) and 249–266 (ANNN…PAAR). Residues 284 to 347 (EEKRRIRRER…NQLKYVIEAH (64 aa)) form the bZIP domain. Residues 286–305 (KRRIRRERNKAAAARCRKRR) are basic motif. Residues 312 to 340 (LTEEVDALVKKGDTLKAEITTLTELRNQL) are leucine-zipper. The interval 375 to 414 (STGGSSCGSVHSNHSHNNNNNNNNSNDSSSGTITGFDATL) is disordered. Residues 377-405 (GGSSCGSVHSNHSHNNNNNNNNSNDSSSG) show a composition bias toward low complexity. Serine 422 is modified (phosphoserine). 2 disordered regions span residues 447-466 (GLDS…AKRA) and 590-620 (SGPL…LCPL).

The protein belongs to the bZIP family. Fos subfamily. Homodimer. Heterodimer with Jra. The kay-Jra heterodimer binds more stably to the AP-1 site than either of the two proteins alone.

The protein localises to the nucleus. In terms of biological role, developmentally regulated transcription factor AP-1 binds and recognizes the enhancer DNA sequence: 5'-TGA[CG]TCA-3'. May play a role in the function or determination of a particular subset of cells in the developing embryo. It is able to carry out its function either independently of or in conjunction with Jra. This Drosophila willistoni (Fruit fly) protein is Transcription factor kayak.